A 577-amino-acid polypeptide reads, in one-letter code: MNIQALLSEKVRQAMIAAGAPADCEPQVRQSAKVQFGDYQANGMMAVAKKLGMAPRQLAEQVLTHLDLNGIASKVEIAGPGFINIFLDPAFLAEHVQQALASDRLGVATPEKQTIVVDYSAPNVAKEMHVGHLRSTIIGDAAVRTLEFLGHKVIRANHVGDWGTQFGMLIAWLEKQQQENAGEMELADLEGFYRDAKKHYDEDEEFAERARNYVVKLQSGDEYFREMWRKLVDITMTQNQITYDRLNVTLTRDDVMGESLYNPMLPGIVADLKAKGLAVESEGATVVFLDEFKNKEGEPMGVIIQKKDGGYLYTTTDIACAKYRYETLHADRVLYYIDSRQHQHLMQAWAIVRKAGYVPESVPLEHHMFGMMLGKDGKPFKTRAGGTVKLADLLDEALERARRLVAEKNPDMPADGLEKLANAVGIGAVKYADLSKNRTTDYIFDWDNMLAFEGNTAPYMQYAYTRVLSVFRKAEIDEEQLAAAPVIIREDREAQLAARLLQFEETLTVVAREGTPHVMCAYLYDLAGLFSGFYEHCPILSAENEEVRNSRLKLAQLTAKTLKLGLDTLGIETVERM.

The short motif at 122-132 (PNVAKEMHVGH) is the 'HIGH' region element.

Belongs to the class-I aminoacyl-tRNA synthetase family. As to quaternary structure, monomer.

It is found in the cytoplasm. The catalysed reaction is tRNA(Arg) + L-arginine + ATP = L-arginyl-tRNA(Arg) + AMP + diphosphate. This is Arginine--tRNA ligase from Escherichia coli O9:H4 (strain HS).